A 353-amino-acid chain; its full sequence is D-alanine--D-alanine ligase (353 aa).

One can recognise an ATP-grasp domain in the interval 135–344; the sequence is KMVFAQAGLA…FPQLVDRLVQ (210 aa). 171-226 is a binding site for ATP; sequence EAQLDYPMFVKPANLGSSVGISKVRTRDELEKALDLAAEYDRRLIVEAGVTAREVE. Mg(2+) contacts are provided by Asp297, Glu311, and Asn313.

Belongs to the D-alanine--D-alanine ligase family. Mg(2+) serves as cofactor. It depends on Mn(2+) as a cofactor.

Its subcellular location is the cytoplasm. The enzyme catalyses 2 D-alanine + ATP = D-alanyl-D-alanine + ADP + phosphate + H(+). The protein operates within cell wall biogenesis; peptidoglycan biosynthesis. In terms of biological role, cell wall formation. In Picosynechococcus sp. (strain ATCC 27264 / PCC 7002 / PR-6) (Agmenellum quadruplicatum), this protein is D-alanine--D-alanine ligase.